The sequence spans 63 residues: Conotoxin TxMRCL-D012 (63 aa).

The first 19 residues, 1 to 19, serve as a signal peptide directing secretion; the sequence is MRCLPVFVILLLLIASTPS. Positions 20–47 are excised as a propeptide; that stretch reads DTVPLKTKDDMPQASFHGNARRTLQMLS. Gln-50 is subject to Pyrrolidone carboxylic acid.

The protein belongs to the conotoxin T superfamily. Post-translationally, contains 2 disulfide bonds that can be either 'C1-C3, C2-C4' or 'C1-C4, C2-C3', since these disulfide connectivities have been observed for conotoxins with cysteine framework V (for examples, see AC P0DQQ7 and AC P81755). Expressed by the venom duct.

The protein localises to the secreted. This is Conotoxin TxMRCL-D012 from Conus textile (Cloth-of-gold cone).